Consider the following 53-residue polypeptide: MKLTAVLMVAVLVLTACQLITANECSRKGEWCGLESVLCCNGGSWNCWFVCTA.

Residues 1–22 form the signal peptide; that stretch reads MKLTAVLMVAVLVLTACQLITA. 3 cysteine pairs are disulfide-bonded: cysteine 25-cysteine 40, cysteine 32-cysteine 47, and cysteine 39-cysteine 51.

It belongs to the conotoxin O1 superfamily. In terms of tissue distribution, expressed by the venom duct.

The protein resides in the secreted. Probable neurotoxin. This is Conotoxin Cal6.23 from Californiconus californicus (California cone).